The sequence spans 353 residues: MANDQKNSESFPAKEDHKKDDAAAPAEVDHKDEFSASQPHPVENIVLVGRTGNGKSATGNSIVRSKVFKSKTKSSGVTMECHAVKAVTPEGPILNVIDTPGLFDLSVSAEFIGKEIVKCLTLADGGLHAVLLVLSVRTRISQEEEMVLSTLQVLFGSKIVDYLIVVFTGGDVLEDDGMTLEDYLGDNMPDFLKRVLILCGQRMILFDNKTKDDEKKTKQVHELLKLIDLVRKQNNNIPYTDEMYHMIKEENERHKKEQEELESKGHSEEQLAALMKELQIMNERNLKAMAEMMEKNMKIAMEAQEKLFEQREKAQEMSYQQKMEMQEKLKQMEGRMRAEMEAQMLSRQQCSIL.

Over residues 1-10 the composition is skewed to polar residues; that stretch reads MANDQKNSES. The segment at 1–43 is disordered; it reads MANDQKNSESFPAKEDHKKDDAAAPAEVDHKDEFSASQPHPVE. Residues 12 to 34 are compositionally biased toward basic and acidic residues; sequence PAKEDHKKDDAAAPAEVDHKDEF. The region spanning 40 to 248 is the AIG1-type G domain; that stretch reads HPVENIVLVG…YTDEMYHMIK (209 aa). The G1 stretch occupies residues 49–56; the sequence is GRTGNGKS. GTP contacts are provided by residues 49 to 57 and S70; that span reads GRTGNGKSA. The segment at 76-80 is G2; the sequence is GVTME. The interval 98 to 101 is G3; sequence DTPG. The interval 168 to 171 is G4; it reads TGGD. The tract at residues 207–209 is G5; the sequence is DNK. Residue N208 coordinates GTP. The stretch at 244–291 forms a coiled coil; sequence YHMIKEENERHKKEQEELESKGHSEEQLAALMKELQIMNERNLKAMAE.

Belongs to the TRAFAC class TrmE-Era-EngA-EngB-Septin-like GTPase superfamily. AIG1/Toc34/Toc159-like paraseptin GTPase family. IAN subfamily. Mainly expressed in leaves.

In Arabidopsis thaliana (Mouse-ear cress), this protein is Immune-associated nucleotide-binding protein 8.